Consider the following 626-residue polypeptide: Threonine--tRNA ligase (626 aa).

Positions 1–144 (MRMLLIHADY…LSRTIVPEEG (144 aa)) are editing domain. The catalytic stretch occupies residues 207–506 (PHVRLMLEHE…QAQGKKPMFP (300 aa)). Zn(2+) is bound by residues Cys299, His351, and His475.

This sequence belongs to the class-II aminoacyl-tRNA synthetase family. In terms of assembly, homodimer. It depends on Zn(2+) as a cofactor.

It is found in the cytoplasm. The catalysed reaction is tRNA(Thr) + L-threonine + ATP = L-threonyl-tRNA(Thr) + AMP + diphosphate + H(+). Catalyzes the attachment of threonine to tRNA(Thr) in a two-step reaction: L-threonine is first activated by ATP to form Thr-AMP and then transferred to the acceptor end of tRNA(Thr). Also edits incorrectly charged L-seryl-tRNA(Thr). The sequence is that of Threonine--tRNA ligase from Thermococcus gammatolerans (strain DSM 15229 / JCM 11827 / EJ3).